Consider the following 546-residue polypeptide: Chaperonin GroEL 2 (546 aa).

ATP is bound by residues 30–33 (TLGP), K51, 87–91 (DGTTT), G415, 479–481 (NAA), and D495. The disordered stretch occupies residues 526 to 546 (KEDAPMPGGMPGGMGGMGMDM). Residues 534–546 (GMPGGMGGMGMDM) are compositionally biased toward gly residues.

It belongs to the chaperonin (HSP60) family. In terms of assembly, forms a cylinder of 14 subunits composed of two heptameric rings stacked back-to-back. Interacts with the co-chaperonin GroES.

The protein resides in the cytoplasm. The enzyme catalyses ATP + H2O + a folded polypeptide = ADP + phosphate + an unfolded polypeptide.. In terms of biological role, together with its co-chaperonin GroES, plays an essential role in assisting protein folding. The GroEL-GroES system forms a nano-cage that allows encapsulation of the non-native substrate proteins and provides a physical environment optimized to promote and accelerate protein folding. This is Chaperonin GroEL 2 from Burkholderia lata (strain ATCC 17760 / DSM 23089 / LMG 22485 / NCIMB 9086 / R18194 / 383).